The chain runs to 335 residues: Beta-hexosaminidase (335 aa).

Substrate-binding positions include Asp-60, Arg-68, Arg-133, and 163 to 164; that span reads KH. His-176 (proton donor/acceptor) is an active-site residue. The active-site Nucleophile is Asp-247.

Belongs to the glycosyl hydrolase 3 family. NagZ subfamily.

The protein localises to the cytoplasm. It carries out the reaction Hydrolysis of terminal non-reducing N-acetyl-D-hexosamine residues in N-acetyl-beta-D-hexosaminides.. Its pathway is cell wall biogenesis; peptidoglycan recycling. Functionally, plays a role in peptidoglycan recycling by cleaving the terminal beta-1,4-linked N-acetylglucosamine (GlcNAc) from peptide-linked peptidoglycan fragments, giving rise to free GlcNAc, anhydro-N-acetylmuramic acid and anhydro-N-acetylmuramic acid-linked peptides. In Xylella fastidiosa (strain M23), this protein is Beta-hexosaminidase.